A 309-amino-acid polypeptide reads, in one-letter code: Glutamyl-Q tRNA(Asp) synthetase (309 aa).

L-glutamate contacts are provided by residues 8 to 12 and glutamate 44; that span reads RFSPS. The 'HIGH' region signature appears at 11–21; sequence PSPTGPLHAGS. Residues cysteine 100, cysteine 102, tyrosine 126, and cysteine 130 each coordinate Zn(2+). 2 residues coordinate L-glutamate: tyrosine 205 and arginine 223. The 'KMSKS' region signature appears at 261–265; sequence KLSKQ. An ATP-binding site is contributed by lysine 264.

The protein belongs to the class-I aminoacyl-tRNA synthetase family. GluQ subfamily. Zn(2+) serves as cofactor.

Functionally, catalyzes the tRNA-independent activation of glutamate in presence of ATP and the subsequent transfer of glutamate onto a tRNA(Asp). Glutamate is transferred on the 2-amino-5-(4,5-dihydroxy-2-cyclopenten-1-yl) moiety of the queuosine in the wobble position of the QUC anticodon. The chain is Glutamyl-Q tRNA(Asp) synthetase from Albidiferax ferrireducens (strain ATCC BAA-621 / DSM 15236 / T118) (Rhodoferax ferrireducens).